A 512-amino-acid chain; its full sequence is Norfluorocurarine oxidase (512 aa).

The helical transmembrane segment at Leu-3–Phe-23 threads the bilayer. Cys-453 contributes to the heme binding site.

This sequence belongs to the cytochrome P450 family. Heme is required as a cofactor.

It is found in the membrane. It carries out the reaction norfluorocurarine + reduced [NADPH--hemoprotein reductase] + O2 = 18-hydroxynorfluorocurarine + oxidized [NADPH--hemoprotein reductase] + H2O + H(+). It participates in alkaloid biosynthesis. Monooxygenase involved in the biosynthesis of curare monoterpene indole alkaloids (MIAs), natural products such as diaboline, a pharmacologically active compound used to regulate blood pressure. Curare alkaloids act as animal glycine receptor antagonists. Catalyzes the conversion of norfluorocurarine to 18-OH norfluorocurarine. This Strychnos sp protein is Norfluorocurarine oxidase.